Here is a 255-residue protein sequence, read N- to C-terminus: tRNA (guanine-N(1)-)-methyltransferase (255 aa).

S-adenosyl-L-methionine contacts are provided by residues glycine 113 and 133–138 (IGDYVL).

Belongs to the RNA methyltransferase TrmD family. As to quaternary structure, homodimer.

Its subcellular location is the cytoplasm. The catalysed reaction is guanosine(37) in tRNA + S-adenosyl-L-methionine = N(1)-methylguanosine(37) in tRNA + S-adenosyl-L-homocysteine + H(+). In terms of biological role, specifically methylates guanosine-37 in various tRNAs. This Serratia proteamaculans (strain 568) protein is tRNA (guanine-N(1)-)-methyltransferase.